We begin with the raw amino-acid sequence, 767 residues long: Probable beta-glucosidase K (767 aa).

Asn19 carries N-linked (GlcNAc...) asparagine glycosylation. Asp232 is an active-site residue. Residues Asn324, Asn477, and Asn749 are each glycosylated (N-linked (GlcNAc...) asparagine). Residues 405–552 enclose the PA14 domain; that stretch reads EGQPGLRMRF…DPERAIARAV (148 aa). The disordered stretch occupies residues 727–767; that stretch reads LGRRGRSGSSPAVYRGRSNNVVNRTSHQGAQRISKGGFAAR. Over residues 743–757 the composition is skewed to polar residues; sequence RSNNVVNRTSHQGAQ.

The protein belongs to the glycosyl hydrolase 3 family.

It localises to the secreted. The enzyme catalyses Hydrolysis of terminal, non-reducing beta-D-glucosyl residues with release of beta-D-glucose.. It functions in the pathway glycan metabolism; cellulose degradation. Beta-glucosidases are one of a number of cellulolytic enzymes involved in the degradation of cellulosic biomass. Catalyzes the last step releasing glucose from the inhibitory cellobiose. This chain is Probable beta-glucosidase K (bglK), found in Aspergillus fumigatus (strain ATCC MYA-4609 / CBS 101355 / FGSC A1100 / Af293) (Neosartorya fumigata).